A 496-amino-acid chain; its full sequence is Probable cytosol aminopeptidase (496 aa).

Mn(2+) contacts are provided by Lys-266 and Asp-271. Residue Lys-278 is part of the active site. Residues Asp-289, Asp-348, and Glu-350 each contribute to the Mn(2+) site. Residue Arg-352 is part of the active site.

This sequence belongs to the peptidase M17 family. Mn(2+) serves as cofactor.

It localises to the cytoplasm. It catalyses the reaction Release of an N-terminal amino acid, Xaa-|-Yaa-, in which Xaa is preferably Leu, but may be other amino acids including Pro although not Arg or Lys, and Yaa may be Pro. Amino acid amides and methyl esters are also readily hydrolyzed, but rates on arylamides are exceedingly low.. It carries out the reaction Release of an N-terminal amino acid, preferentially leucine, but not glutamic or aspartic acids.. In terms of biological role, presumably involved in the processing and regular turnover of intracellular proteins. Catalyzes the removal of unsubstituted N-terminal amino acids from various peptides. This chain is Probable cytosol aminopeptidase, found in Azotobacter vinelandii (strain DJ / ATCC BAA-1303).